Here is a 268-residue protein sequence, read N- to C-terminus: Undecaprenyl-diphosphatase (268 aa).

The next 7 helical transmembrane spans lie at 43-63, 83-103, 109-129, 144-164, 184-204, 218-238, and 246-266; these read FWNT…VVIY, FVIG…IAGK, LFNP…LMWV, FPLP…IPGV, AAEF…AYDF, IVAI…KAFL, and FTFF…ALAL.

The protein belongs to the UppP family.

Its subcellular location is the cell inner membrane. It catalyses the reaction di-trans,octa-cis-undecaprenyl diphosphate + H2O = di-trans,octa-cis-undecaprenyl phosphate + phosphate + H(+). In terms of biological role, catalyzes the dephosphorylation of undecaprenyl diphosphate (UPP). Confers resistance to bacitracin. The protein is Undecaprenyl-diphosphatase of Nitrobacter hamburgensis (strain DSM 10229 / NCIMB 13809 / X14).